The sequence spans 36 residues: Pancreatic polypeptide (36 aa).

Tyrosine 36 carries the tyrosine amide modification.

This sequence belongs to the NPY family.

Its subcellular location is the secreted. Functionally, hormone secreted by pancreatic cells that acts as a regulator of pancreatic and gastrointestinal functions. This is Pancreatic polypeptide (PPY) from Meleagris gallopavo (Wild turkey).